The following is a 253-amino-acid chain: Probable transcriptional regulatory protein Mlut_12910 (253 aa).

The protein belongs to the TACO1 family.

The protein resides in the cytoplasm. The chain is Probable transcriptional regulatory protein Mlut_12910 from Micrococcus luteus (strain ATCC 4698 / DSM 20030 / JCM 1464 / CCM 169 / CCUG 5858 / IAM 1056 / NBRC 3333 / NCIMB 9278 / NCTC 2665 / VKM Ac-2230) (Micrococcus lysodeikticus).